Reading from the N-terminus, the 278-residue chain is Orotidine 5'-phosphate decarboxylase (278 aa).

K95 serves as the catalytic Proton donor.

This sequence belongs to the OMP decarboxylase family. Type 2 subfamily.

It catalyses the reaction orotidine 5'-phosphate + H(+) = UMP + CO2. It functions in the pathway pyrimidine metabolism; UMP biosynthesis via de novo pathway; UMP from orotate: step 2/2. This Corynebacterium glutamicum (strain R) protein is Orotidine 5'-phosphate decarboxylase.